Here is a 618-residue protein sequence, read N- to C-terminus: DNA mismatch repair protein MutL (618 aa).

Low complexity predominate over residues 367-381 (EPTAAREPATPRYSG). The interval 367 to 402 (EPTAAREPATPRYSGGASGGNGGRQSAGGWPHAQPG) is disordered. Residues 382–392 (GASGGNGGRQS) are compositionally biased toward gly residues.

It belongs to the DNA mismatch repair MutL/HexB family.

In terms of biological role, this protein is involved in the repair of mismatches in DNA. It is required for dam-dependent methyl-directed DNA mismatch repair. May act as a 'molecular matchmaker', a protein that promotes the formation of a stable complex between two or more DNA-binding proteins in an ATP-dependent manner without itself being part of a final effector complex. The chain is DNA mismatch repair protein MutL from Salmonella dublin (strain CT_02021853).